A 195-amino-acid polypeptide reads, in one-letter code: ATP-dependent Clp protease proteolytic subunit (195 aa).

The Nucleophile role is filled by Ser-98. His-123 is a catalytic residue.

The protein belongs to the peptidase S14 family. As to quaternary structure, fourteen ClpP subunits assemble into 2 heptameric rings which stack back to back to give a disk-like structure with a central cavity, resembling the structure of eukaryotic proteasomes.

It is found in the cytoplasm. The enzyme catalyses Hydrolysis of proteins to small peptides in the presence of ATP and magnesium. alpha-casein is the usual test substrate. In the absence of ATP, only oligopeptides shorter than five residues are hydrolyzed (such as succinyl-Leu-Tyr-|-NHMec, and Leu-Tyr-Leu-|-Tyr-Trp, in which cleavage of the -Tyr-|-Leu- and -Tyr-|-Trp bonds also occurs).. In terms of biological role, cleaves peptides in various proteins in a process that requires ATP hydrolysis. Has a chymotrypsin-like activity. Plays a major role in the degradation of misfolded proteins. The sequence is that of ATP-dependent Clp protease proteolytic subunit from Helicobacter pylori (strain G27).